Consider the following 953-residue polypeptide: Coatomer subunit beta (953 aa).

Residue Thr-2 is modified to N-acetylthreonine. 6 HEAT repeats span residues 96 to 131 (HEMI…KEAE), 132 to 168 (LLEP…NFEN), 240 to 276 (SERA…SAPT), 277 to 314 (AIKA…HPAH), 316 to 353 (RVLQ…SRNV), and 396 to 433 (DMAA…RFDN). Lys-494 bears the N6-acetyllysine mark.

In terms of assembly, oligomeric complex that consists of at least the alpha, beta, beta', gamma, delta, epsilon and zeta subunits. Interacts with SCYL1. Interacts with CAPN8. Interacts with COPG1. Interacts with ARF1 (myristoylated); this interaction is required for binding of COPB1 to Golgi membranes. Interacts (via trunk domain) with ARF1 (via switch I region); the interaction is direct. Interacts with KCNK2 (via N-terminus); this interaction increases the channel-mediated whole cell currents and promotes plasma membrane expression of KCNK2. Interacts with PRKCE. Interacts with STX17. Interacts with TMEM115. Interacts with TMEM41B. In terms of processing, proteolytically cleaved between Ser-528 and Ser-529 by CAPN8.

The protein resides in the cytoplasm. It is found in the golgi apparatus membrane. The protein localises to the cytoplasmic vesicle. Its subcellular location is the COPI-coated vesicle membrane. It localises to the cell membrane. The protein resides in the endoplasmic reticulum-Golgi intermediate compartment. It is found in the microsome membrane. In terms of biological role, the coatomer is a cytosolic protein complex that binds to dilysine motifs and reversibly associates with Golgi non-clathrin-coated vesicles, which further mediate biosynthetic protein transport from the ER, via the Golgi up to the trans Golgi network. Coatomer complex is required for budding from Golgi membranes, and is essential for the retrograde Golgi-to-ER transport of dilysine-tagged proteins. In mammals, the coatomer can only be recruited by membranes associated to ADP-ribosylation factors (ARFs), which are small GTP-binding proteins; the complex also influences the Golgi structural integrity, as well as the processing, activity, and endocytic recycling of LDL receptors. Involved in the Golgi disassembly and reassembly processes during cell cycle. Involved in autophagy by playing a role in early endosome function. Plays a role in organellar compartmentalization of secretory compartments including endoplasmic reticulum (ER)-Golgi intermediate compartment (ERGIC), Golgi, trans-Golgi network (TGN) and recycling endosomes, and in biosynthetic transport of CAV1. Plays a functional role in facilitating the transport of kappa-type opioid receptor mRNAs into axons and enhances translation of these proteins in the axonal compartment of dorsal root ganglion (DRG) cells. Required for limiting lipid storage in lipid droplets. Involved in lipid homeostasis by regulating the presence of perilipin family members PLIN2 and PLIN3 at the lipid droplet surface and promoting the association of adipocyte triglyceride lipase (PNPLA2) with the lipid droplet surface to mediate lipolysis. The sequence is that of Coatomer subunit beta (Copb1) from Rattus norvegicus (Rat).